The sequence spans 74 residues: MDIVSLKFIGVGLMAIGMYGAALGVSNIFSSLLNAIARNPAAAENLQRMALIGAGLAEAIGLFSFVIAMLLIFS.

2 consecutive transmembrane segments (helical) span residues 8–28 (FIGV…VSNI) and 52–72 (IGAG…MLLI).

The protein belongs to the ATPase C chain family. As to quaternary structure, F-type ATPases have 2 components, F(1) - the catalytic core - and F(0) - the membrane proton channel. F(1) has five subunits: alpha(3), beta(3), gamma(1), delta(1), epsilon(1). F(0) has three main subunits: a(1), b(2) and c(10-14). The alpha and beta chains form an alternating ring which encloses part of the gamma chain. F(1) is attached to F(0) by a central stalk formed by the gamma and epsilon chains, while a peripheral stalk is formed by the delta and b chains.

It is found in the cell inner membrane. F(1)F(0) ATP synthase produces ATP from ADP in the presence of a proton or sodium gradient. F-type ATPases consist of two structural domains, F(1) containing the extramembraneous catalytic core and F(0) containing the membrane proton channel, linked together by a central stalk and a peripheral stalk. During catalysis, ATP synthesis in the catalytic domain of F(1) is coupled via a rotary mechanism of the central stalk subunits to proton translocation. Functionally, key component of the F(0) channel; it plays a direct role in translocation across the membrane. A homomeric c-ring of between 10-14 subunits forms the central stalk rotor element with the F(1) delta and epsilon subunits. This chain is ATP synthase subunit c, found in Rickettsia canadensis (strain McKiel).